A 220-amino-acid chain; its full sequence is Glutathione S-transferase U23 (220 aa).

The 80-residue stretch at 3-82 folds into the GST N-terminal domain; that stretch reads EEIILLDYWA…YIDELWPDTN (80 aa). Residues 13–14, 39–40, 53–54, and 66–67 each bind glutathione; these read SM, NK, KI, and ES. The GST C-terminal domain maps to 88–208; sequence DPYQRAQARF…LPDSDKVLKS (121 aa).

This sequence belongs to the GST superfamily. Tau family.

The protein resides in the cytoplasm. It is found in the cytosol. The enzyme catalyses RX + glutathione = an S-substituted glutathione + a halide anion + H(+). Functionally, may be involved in the conjugation of reduced glutathione to a wide number of exogenous and endogenous hydrophobic electrophiles and have a detoxification role against certain herbicides. The sequence is that of Glutathione S-transferase U23 (GSTU23) from Arabidopsis thaliana (Mouse-ear cress).